The sequence spans 342 residues: Phosphate acyltransferase (342 aa).

Belongs to the PlsX family. Homodimer. Probably interacts with PlsY.

The protein localises to the cytoplasm. The enzyme catalyses a fatty acyl-[ACP] + phosphate = an acyl phosphate + holo-[ACP]. It functions in the pathway lipid metabolism; phospholipid metabolism. Its function is as follows. Catalyzes the reversible formation of acyl-phosphate (acyl-PO(4)) from acyl-[acyl-carrier-protein] (acyl-ACP). This enzyme utilizes acyl-ACP as fatty acyl donor, but not acyl-CoA. The chain is Phosphate acyltransferase from Shewanella putrefaciens (strain CN-32 / ATCC BAA-453).